A 149-amino-acid chain; its full sequence is Protein Rv2250A (149 aa).

This chain is Protein Rv2250A, found in Mycobacterium tuberculosis (strain ATCC 25618 / H37Rv).